The following is a 91-amino-acid chain: Small ribosomal subunit protein bS20 (91 aa).

It belongs to the bacterial ribosomal protein bS20 family.

In terms of biological role, binds directly to 16S ribosomal RNA. This is Small ribosomal subunit protein bS20 from Mycoplasma mobile (strain ATCC 43663 / 163K / NCTC 11711) (Mesomycoplasma mobile).